The following is a 1099-amino-acid chain: Solute carrier family 12 member 1 (1099 aa).

At 1 to 177 (MSLNNSSNVF…EDDQAGVVKF (177 aa)) the chain is on the cytoplasmic side. Residues 20 to 23 (RFQV) carry the RFXV motif motif. A disordered region spans residues 31–53 (ESSAAADDNTDPPHYEETSFGDE). Serine 61 carries the phosphoserine modification. The residue at position 91 (serine 91) is a Phosphoserine; by OXSR1 and STK39. At threonine 95 the chain carries Phosphothreonine. Phosphothreonine; by OXSR1 and STK39 occurs at positions 100 and 105. The residue at position 118 (threonine 118) is a Phosphothreonine. At serine 120 the chain carries Phosphoserine. Position 130 is a phosphoserine; by AMPK (serine 130). Serine 148 carries the post-translational modification Phosphoserine. A helical membrane pass occupies residues 178-198 (GWVKGVLVRCMLNIWGVMLFI). At 199 to 201 (RLS) the chain is on the extracellular side. The helical transmembrane segment at 202 to 222 (WIVGEAGIGLGVLIILLSTMV) threads the bilayer. At 223–259 (TSITGLSTSAIATNGFVRGGGAYYLISRSLGPEFGGS) the chain is on the cytoplasmic side. Residues 260–280 (IGLIFAFANAVAVAMYVVGFA) traverse the membrane as a helical segment. At 281 to 302 (ETVVDLLKESDSMMVDPTNDIR) the chain is on the extracellular side. A helical membrane pass occupies residues 303–323 (IIGSITVVILLGISVAGMEWE). Topologically, residues 324–327 (AKAQ) are cytoplasmic. The helical transmembrane segment at 328–348 (VILLVILLIAIANFFIGTVIP) threads the bilayer. Residues 349–379 (SNNEKKSRGFFNYQASIFAENFGPRFTKGEG) are Extracellular-facing. The helical transmembrane segment at 380–400 (FFSVFAIFFPAATGILAGANI) threads the bilayer. The Cytoplasmic portion of the chain corresponds to 401-417 (SGDLEDPQDAIPRGTML). Residues 418–438 (AIFITTVAYLGVAICVGACVV) form a helical membrane-spanning segment. At 439-550 (RDATGNMNDT…NNEPLRGYIL (112 aa)) the chain is on the extracellular side. Asparagine 446 and asparagine 456 each carry an N-linked (GlcNAc...) asparagine glycan. The next 2 membrane-spanning stretches (helical) occupy residues 551–571 (TFLIAMAFILIAELNTIAPII) and 572–592 (SNFFLASYALINFSCFHASYA). At 593-609 (KSPGWRPAYGIYNMWVS) the chain is on the extracellular side. The helical transmembrane segment at 610–630 (LFGAVLCCAVMFVINWWAAVI) threads the bilayer. Residues 631 to 1099 (TYVIEFFLYV…NHKNVLTFYS (469 aa)) lie on the Cytoplasmic side of the membrane.

This sequence belongs to the SLC12A transporter family. In terms of assembly, when phosphorylated, interacts with PPP3CB. Post-translationally, phosphorylated at Ser-91, Thr-100 and Thr-105 by OXSR1/OSR1 and STK39/SPAK downstream of WNK kinases (WNK1, WNK2, WNK3 or WNK4), promoting its activity. In terms of tissue distribution, kidney; localizes to the thick ascending limbs (at protein level).

The protein resides in the apical cell membrane. It carries out the reaction K(+)(out) + 2 chloride(out) + Na(+)(out) = K(+)(in) + 2 chloride(in) + Na(+)(in). Activated following phosphorylation by OXSR1/OSR1 and STK39/SPAK downstream of WNK kinases (WNK1, WNK2, WNK3 or WNK4). In terms of biological role, renal sodium, potassium and chloride ion cotransporter that mediates the transepithelial NaCl reabsorption in the thick ascending limb and plays an essential role in the urinary concentration and volume regulation. Electrically silent transporter system. The protein is Solute carrier family 12 member 1 (SLC12A1) of Homo sapiens (Human).